Consider the following 170-residue polypeptide: Plastocyanin, chloroplastic (170 aa).

The transit peptide at 1–71 directs the protein to the chloroplast; that stretch reads MATVTSAAVA…SAMLASNAMA (71 aa). The region spanning 72-170 is the Plastocyanin-like domain; sequence LEVLLGGDDG…AGMVGKVTVN (99 aa). His108, Cys155, His158, and Met163 together coordinate Cu cation.

It belongs to the plastocyanin family. The cofactor is Cu(2+).

It localises to the plastid. It is found in the chloroplast thylakoid membrane. Functionally, participates in electron transfer between P700 and the cytochrome b6-f complex in photosystem I. This is Plastocyanin, chloroplastic (PETE) from Solanum lycopersicum (Tomato).